Reading from the N-terminus, the 174-residue chain is Dual-action ribosomal maturation protein DarP (174 aa).

It belongs to the DarP family.

The protein resides in the cytoplasm. Its function is as follows. Member of a network of 50S ribosomal subunit biogenesis factors which assembles along the 30S-50S interface, preventing incorrect 23S rRNA structures from forming. Promotes peptidyl transferase center (PTC) maturation. The sequence is that of Dual-action ribosomal maturation protein DarP from Pseudomonas aeruginosa (strain LESB58).